Consider the following 409-residue polypeptide: Multifunctional CCA protein (409 aa).

ATP-binding residues include G8 and R11. CTP is bound by residues G8 and R11. Mg(2+) is bound by residues D21 and D23. 3 residues coordinate ATP: R91, R137, and R140. CTP is bound by residues R91, R137, and R140. Residues 228–329 enclose the HD domain; it reads TGAHTLSVLL…LELLQSFDVF (102 aa).

Belongs to the tRNA nucleotidyltransferase/poly(A) polymerase family. Bacterial CCA-adding enzyme type 1 subfamily. In terms of assembly, monomer. Can also form homodimers and oligomers. Mg(2+) is required as a cofactor. Ni(2+) serves as cofactor.

It catalyses the reaction a tRNA precursor + 2 CTP + ATP = a tRNA with a 3' CCA end + 3 diphosphate. It carries out the reaction a tRNA with a 3' CCA end + 2 CTP + ATP = a tRNA with a 3' CCACCA end + 3 diphosphate. In terms of biological role, catalyzes the addition and repair of the essential 3'-terminal CCA sequence in tRNAs without using a nucleic acid template. Adds these three nucleotides in the order of C, C, and A to the tRNA nucleotide-73, using CTP and ATP as substrates and producing inorganic pyrophosphate. tRNA 3'-terminal CCA addition is required both for tRNA processing and repair. Also involved in tRNA surveillance by mediating tandem CCA addition to generate a CCACCA at the 3' terminus of unstable tRNAs. While stable tRNAs receive only 3'-terminal CCA, unstable tRNAs are marked with CCACCA and rapidly degraded. The protein is Multifunctional CCA protein of Pseudomonas fluorescens (strain ATCC BAA-477 / NRRL B-23932 / Pf-5).